Reading from the N-terminus, the 624-residue chain is Chaperone protein HtpG (624 aa).

Residues 1-341 (MAVKQFKAES…SPDLSLNISR (341 aa)) form an a; substrate-binding region. Positions 342–550 (ELLQHDRQLK…DGELSIEMEK (209 aa)) are b. The tract at residues 551 to 624 (VLKMMPDNNN…FANDVASLMK (74 aa)) is c.

Belongs to the heat shock protein 90 family. In terms of assembly, homodimer.

Its subcellular location is the cytoplasm. Its function is as follows. Molecular chaperone. Has ATPase activity. In Clostridium acetobutylicum (strain ATCC 824 / DSM 792 / JCM 1419 / IAM 19013 / LMG 5710 / NBRC 13948 / NRRL B-527 / VKM B-1787 / 2291 / W), this protein is Chaperone protein HtpG.